The chain runs to 93 residues: U12-lycotoxin-Ls1b (93 aa).

A signal peptide spans 1-18; that stretch reads MKFAVILLFSLVVLAVAS. Positions 19 to 38 are excised as a propeptide; that stretch reads ESVEEVRREIDIEDLPEQQR.

It belongs to the neurotoxin 31 family. Post-translationally, contains 5 disulfide bonds. In terms of tissue distribution, expressed by the venom gland.

It is found in the secreted. In Lycosa singoriensis (Wolf spider), this protein is U12-lycotoxin-Ls1b.